We begin with the raw amino-acid sequence, 380 residues long: Erythronate-4-phosphate dehydrogenase (380 aa).

Ser45 and Thr66 together coordinate substrate. Cys65 and Cys90 are joined by a disulfide. NAD(+)-binding positions include 126–127 (QV), Asp146, Thr175, 206–208 (ASR), and Asp232. Residue Arg208 is part of the active site. Glu237 is a catalytic residue. His254 acts as the Proton donor in catalysis. Gly257 contributes to the NAD(+) binding site. Tyr258 provides a ligand contact to substrate.

This sequence belongs to the D-isomer specific 2-hydroxyacid dehydrogenase family. PdxB subfamily. Homodimer.

It localises to the cytoplasm. The catalysed reaction is 4-phospho-D-erythronate + NAD(+) = (R)-3-hydroxy-2-oxo-4-phosphooxybutanoate + NADH + H(+). It participates in cofactor biosynthesis; pyridoxine 5'-phosphate biosynthesis; pyridoxine 5'-phosphate from D-erythrose 4-phosphate: step 2/5. Catalyzes the oxidation of erythronate-4-phosphate to 3-hydroxy-2-oxo-4-phosphonooxybutanoate. The chain is Erythronate-4-phosphate dehydrogenase from Pseudomonas aeruginosa (strain ATCC 15692 / DSM 22644 / CIP 104116 / JCM 14847 / LMG 12228 / 1C / PRS 101 / PAO1).